Reading from the N-terminus, the 106-residue chain is Stress-responsive protein 1 (106 aa).

It is found in the mitochondrion. Its function is as follows. Stress-responsive protein that may play a role in regulation of cell cycle. This Schizosaccharomyces pombe (strain 972 / ATCC 24843) (Fission yeast) protein is Stress-responsive protein 1 (sro1).